Here is a 500-residue protein sequence, read N- to C-terminus: L-arabinose isomerase (500 aa).

The Mn(2+) site is built by Glu-306, Glu-333, His-350, and His-450.

It belongs to the arabinose isomerase family. Homohexamer. Mn(2+) is required as a cofactor.

The catalysed reaction is beta-L-arabinopyranose = L-ribulose. It participates in carbohydrate degradation; L-arabinose degradation via L-ribulose; D-xylulose 5-phosphate from L-arabinose (bacterial route): step 1/3. Functionally, catalyzes the conversion of L-arabinose to L-ribulose. The polypeptide is L-arabinose isomerase (Enterobacter sp. (strain 638)).